The primary structure comprises 74 residues: UPF0057 membrane protein At4g30660 (74 aa).

Transmembrane regions (helical) follow at residues 4–24 and 37–57; these read NCEILCEIIIAILLPPLGVCF and LVLTILGYVPGIIYAIYVIVF.

This sequence belongs to the UPF0057 (PMP3) family.

The protein localises to the membrane. The protein is UPF0057 membrane protein At4g30660 of Arabidopsis thaliana (Mouse-ear cress).